We begin with the raw amino-acid sequence, 189 residues long: GMP synthase [glutamine-hydrolyzing] subunit A (189 aa).

The Glutamine amidotransferase type-1 domain occupies 1–189; sequence MIVILNNGGQ…CKKCGFEFEE (189 aa). C76 acts as the Nucleophile in catalysis. Catalysis depends on residues H163 and E165.

As to quaternary structure, heterodimer composed of a glutamine amidotransferase subunit (A) and a GMP-binding subunit (B).

It carries out the reaction XMP + L-glutamine + ATP + H2O = GMP + L-glutamate + AMP + diphosphate + 2 H(+). It participates in purine metabolism; GMP biosynthesis; GMP from XMP (L-Gln route): step 1/1. Catalyzes the synthesis of GMP from XMP. The protein is GMP synthase [glutamine-hydrolyzing] subunit A of Methanococcus maripaludis (strain C5 / ATCC BAA-1333).